Reading from the N-terminus, the 737-residue chain is Procollagen-lysine,2-oxoglutarate 5-dioxygenase 2 (737 aa).

Positions 1–25 (MGGCTVKPQLLLLALVLHPWNPCLG) are cleaved as a signal peptide. Asparagine 63, asparagine 209, and asparagine 297 each carry an N-linked (GlcNAc...) asparagine glycan. Phosphothreonine is present on threonine 320. Tyrosine 323 carries the phosphotyrosine modification. N-linked (GlcNAc...) asparagine glycans are attached at residues asparagine 365 and asparagine 522. The Fe2OG dioxygenase domain occupies 644–737 (KGFALLNFVV…RYIAVSFIDP (94 aa)). Residues histidine 666 and aspartate 668 each contribute to the Fe cation site. N-linked (GlcNAc...) asparagine glycosylation is present at asparagine 696. Lysine 704 is modified (N6-succinyllysine). Histidine 718 is a binding site for Fe cation. Asparagine 725 carries an N-linked (GlcNAc...) asparagine glycan. Arginine 728 is an active-site residue.

As to quaternary structure, homodimer. Fe(2+) is required as a cofactor. The cofactor is L-ascorbate. As to expression, highly expressed in pancreas and muscle. Isoform 1 and isoform 2 are expressed in the majority of the examined cell types. Isoform 2 is specifically expressed in skin, lung, dura and aorta.

It localises to the rough endoplasmic reticulum membrane. It carries out the reaction L-lysyl-[collagen] + 2-oxoglutarate + O2 = (5R)-5-hydroxy-L-lysyl-[collagen] + succinate + CO2. Forms hydroxylysine residues in -Xaa-Lys-Gly- sequences in collagens. These hydroxylysines serve as sites of attachment for carbohydrate units and are essential for the stability of the intermolecular collagen cross-links. The protein is Procollagen-lysine,2-oxoglutarate 5-dioxygenase 2 of Homo sapiens (Human).